A 545-amino-acid polypeptide reads, in one-letter code: Membrane protein insertase YidC (545 aa).

Residues Asn6–Asp26 traverse the membrane as a helical segment. Residues Ser44–Thr65 are disordered. 4 helical membrane-spanning segments follow: residues Leu346–Leu366, Gly424–Leu444, Leu461–Met481, and Val504–Gly524.

This sequence belongs to the OXA1/ALB3/YidC family. Type 1 subfamily. In terms of assembly, interacts with the Sec translocase complex via SecD. Specifically interacts with transmembrane segments of nascent integral membrane proteins during membrane integration.

Its subcellular location is the cell inner membrane. Functionally, required for the insertion and/or proper folding and/or complex formation of integral membrane proteins into the membrane. Involved in integration of membrane proteins that insert both dependently and independently of the Sec translocase complex, as well as at least some lipoproteins. Aids folding of multispanning membrane proteins. This Shewanella pealeana (strain ATCC 700345 / ANG-SQ1) protein is Membrane protein insertase YidC.